A 462-amino-acid polypeptide reads, in one-letter code: MTLKLYDTMAREKRDFVPADPGRVTMYVCGPTVYNHAHIGNFRPVVVFDVLFRLLRHVYGEDAVVYARNVTDVDDKINAKATAEGVEIKVITDRYLAAYHEDAAALLTLPPSLEPKATEHMGPIIEMIGELVANGSAYAAEGHVLFDTQAFPDYGQLSGRDLDDMIAGARVEVAPYKRHPADFVLWKPSKENEPEWDSPWGAGRPGWHIECSAMIDKTLGQTIDIHGGGIDLAFPHHENELAQSRCAHGAPVLANYWLHNGFLDMAGEKMSKSLGNVIIPHELLKTTPGEAIRWALLSGHYRQPLDWTPELIEQSKKALDRLYGALRRAKTVEAGESEPSDEVMAALSDDLNTPLAVSGFFELSSAIERAVTAGDELAITANKGRLLASAGLLGFLQADPDSWFEGDADDDLKAKVEDLLARRIAARTAKDWTAADAIRAEIDALGVVVMDGPAGATWRMKD.

Zn(2+) is bound at residue Cys29. The 'HIGH' region motif lies at 31 to 41; that stretch reads PTVYNHAHIGN. Cys211, His236, and Glu240 together coordinate Zn(2+). The short motif at 269–273 is the 'KMSKS' region element; it reads KMSKS. Lys272 provides a ligand contact to ATP.

It belongs to the class-I aminoacyl-tRNA synthetase family. Monomer. The cofactor is Zn(2+).

The protein localises to the cytoplasm. It carries out the reaction tRNA(Cys) + L-cysteine + ATP = L-cysteinyl-tRNA(Cys) + AMP + diphosphate. In Caulobacter sp. (strain K31), this protein is Cysteine--tRNA ligase.